The following is a 334-amino-acid chain: Ornithine carbamoyltransferase (334 aa).

Carbamoyl phosphate is bound by residues S57–T60, Q84, R108, and H135–Q138. L-ornithine contacts are provided by residues N169, D233, and S237 to M238. Carbamoyl phosphate is bound by residues C275–L276 and R320.

This sequence belongs to the aspartate/ornithine carbamoyltransferase superfamily. OTCase family.

The protein localises to the cytoplasm. It carries out the reaction carbamoyl phosphate + L-ornithine = L-citrulline + phosphate + H(+). Its pathway is amino-acid biosynthesis; L-arginine biosynthesis; L-arginine from L-ornithine and carbamoyl phosphate: step 1/3. In terms of biological role, reversibly catalyzes the transfer of the carbamoyl group from carbamoyl phosphate (CP) to the N(epsilon) atom of ornithine (ORN) to produce L-citrulline. This Aeromonas salmonicida (strain A449) protein is Ornithine carbamoyltransferase.